Here is a 249-residue protein sequence, read N- to C-terminus: ATP synthase subunit a, chloroplastic (249 aa).

A run of 5 helical transmembrane segments spans residues 40–60 (QVLI…VLVV), 97–117 (VPFI…GALL), 136–156 (INTT…AGLS), 201–221 (LVVV…VMFL), and 222–242 (GLFT…AYIG).

This sequence belongs to the ATPase A chain family. As to quaternary structure, F-type ATPases have 2 components, CF(1) - the catalytic core - and CF(0) - the membrane proton channel. CF(1) has five subunits: alpha(3), beta(3), gamma(1), delta(1), epsilon(1). CF(0) has four main subunits: a, b, b' and c.

It localises to the plastid. It is found in the chloroplast thylakoid membrane. In terms of biological role, key component of the proton channel; it plays a direct role in the translocation of protons across the membrane. The sequence is that of ATP synthase subunit a, chloroplastic from Aethionema grandiflorum (Persian stone-cress).